Consider the following 300-residue polypeptide: Protein XRI1 (300 aa).

In terms of assembly, interacts (via C-terminal domain) with MIP1.

It localises to the nucleus. Functionally, required for mitotic division of the generative cell nucleus and the development of mature tricellular pollen grains, and for male and female meiosis. The protein is Protein XRI1 (XRI1) of Arabidopsis thaliana (Mouse-ear cress).